Reading from the N-terminus, the 513-residue chain is Glutamyl-tRNA(Gln) amidotransferase subunit A (513 aa).

Catalysis depends on charge relay system residues lysine 85 and serine 160. Serine 184 functions as the Acyl-ester intermediate in the catalytic mechanism.

Belongs to the amidase family. GatA subfamily. In terms of assembly, heterotrimer of A, B and C subunits.

It catalyses the reaction L-glutamyl-tRNA(Gln) + L-glutamine + ATP + H2O = L-glutaminyl-tRNA(Gln) + L-glutamate + ADP + phosphate + H(+). Allows the formation of correctly charged Gln-tRNA(Gln) through the transamidation of misacylated Glu-tRNA(Gln) in organisms which lack glutaminyl-tRNA synthetase. The reaction takes place in the presence of glutamine and ATP through an activated gamma-phospho-Glu-tRNA(Gln). This chain is Glutamyl-tRNA(Gln) amidotransferase subunit A, found in Bifidobacterium longum subsp. infantis (strain ATCC 15697 / DSM 20088 / JCM 1222 / NCTC 11817 / S12).